The primary structure comprises 205 residues: UPF0111 protein YkaA (205 aa).

The protein belongs to the UPF0111 family.

This Bacillus subtilis (strain 168) protein is UPF0111 protein YkaA (ykaA).